Consider the following 769-residue polypeptide: Ligand-dependent nuclear receptor-interacting factor 1 (769 aa).

Residues Lys259 and Lys279 each participate in a glycyl lysine isopeptide (Lys-Gly) (interchain with G-Cter in SUMO2) cross-link. Over residues 378-387 (QIDQQNSVSP) the composition is skewed to polar residues. The disordered stretch occupies residues 378–400 (QIDQQNSVSPDTPVRKDTLQTVS). Residues Ser402, Ser430, and Ser436 each carry the phosphoserine modification. Lys446 is covalently cross-linked (Glycyl lysine isopeptide (Lys-Gly) (interchain with G-Cter in SUMO2)). Ser502 carries the phosphoserine modification. The interval 528 to 562 (DQEPKIHNEMASTSDKGAQGRNDKKDSQGRSNKAL) is disordered. The PxVxL motif signature appears at 580 to 584 (LRVCL). Position 599 is a phosphoserine (Ser599). Lys605 is covalently cross-linked (Glycyl lysine isopeptide (Lys-Gly) (interchain with G-Cter in SUMO2)). 2 short sequence motifs (nuclear localization signal) span residues 628–631 (KKRK) and 642–645 (KKRK). A Glycyl lysine isopeptide (Lys-Gly) (interchain with G-Cter in SUMO2) cross-link involves residue Lys702. Phosphothreonine is present on Thr732. Positions 740-769 (IRDEKIRRLKQVLREKEAALEEMRKKMHQK) form a coiled coil.

It belongs to the LRIF1 family. As to quaternary structure, interacts with RARA. Interacts with SMCHD1; leading to recruitment to inactivated chromosome X in females. Interacts (via PxVxL motif) with HP1 (CBX1/HP1-beta, CBX3/HP1-gamma and CBX5/HP1-alpha). As to expression, widely expressed, with the highest expression levels in heart, liver and placenta.

The protein resides in the chromosome. It is found in the nucleus matrix. Together with SMCHD1, involved in chromosome X inactivation in females by promoting the compaction of heterochromatin. Also able to repress the ligand-induced transcriptional activity of retinoic acid receptor alpha (RARA), possibly through direct recruitment of histone deacetylases. Also required for silencing of the DUX4 locus in somatic cells. The chain is Ligand-dependent nuclear receptor-interacting factor 1 from Homo sapiens (Human).